The chain runs to 134 residues: Small ribosomal subunit protein uS9 (134 aa).

The protein belongs to the universal ribosomal protein uS9 family.

The polypeptide is Small ribosomal subunit protein uS9 (Pseudothermotoga lettingae (strain ATCC BAA-301 / DSM 14385 / NBRC 107922 / TMO) (Thermotoga lettingae)).